We begin with the raw amino-acid sequence, 459 residues long: ATP-dependent protease ATPase subunit HslU (459 aa).

ATP is bound by residues Val-21, 63–68 (GVGKTE), Asp-273, Glu-338, and Arg-410.

This sequence belongs to the ClpX chaperone family. HslU subfamily. A double ring-shaped homohexamer of HslV is capped on each side by a ring-shaped HslU homohexamer. The assembly of the HslU/HslV complex is dependent on binding of ATP.

The protein resides in the cytoplasm. Functionally, ATPase subunit of a proteasome-like degradation complex; this subunit has chaperone activity. The binding of ATP and its subsequent hydrolysis by HslU are essential for unfolding of protein substrates subsequently hydrolyzed by HslV. HslU recognizes the N-terminal part of its protein substrates and unfolds these before they are guided to HslV for hydrolysis. This chain is ATP-dependent protease ATPase subunit HslU, found in Thermosipho africanus (strain TCF52B).